A 79-amino-acid polypeptide reads, in one-letter code: Acyl carrier protein (79 aa).

Residues 2 to 77 (ENIEQRVKKI…QAIDYVTAHL (76 aa)) form the Carrier domain. O-(pantetheine 4'-phosphoryl)serine is present on Ser-37.

Belongs to the acyl carrier protein (ACP) family. In terms of processing, 4'-phosphopantetheine is transferred from CoA to a specific serine of apo-ACP by AcpS. This modification is essential for activity because fatty acids are bound in thioester linkage to the sulfhydryl of the prosthetic group.

The protein localises to the cytoplasm. Its pathway is lipid metabolism; fatty acid biosynthesis. In terms of biological role, carrier of the growing fatty acid chain in fatty acid biosynthesis. This Aromatoleum aromaticum (strain DSM 19018 / LMG 30748 / EbN1) (Azoarcus sp. (strain EbN1)) protein is Acyl carrier protein.